The chain runs to 185 residues: ATP-dependent protease subunit HslV (185 aa).

The active site involves T12. Na(+) contacts are provided by A168, C171, and T174.

Belongs to the peptidase T1B family. HslV subfamily. As to quaternary structure, a double ring-shaped homohexamer of HslV is capped on each side by a ring-shaped HslU homohexamer. The assembly of the HslU/HslV complex is dependent on binding of ATP.

The protein localises to the cytoplasm. The enzyme catalyses ATP-dependent cleavage of peptide bonds with broad specificity.. Allosterically activated by HslU binding. Protease subunit of a proteasome-like degradation complex believed to be a general protein degrading machinery. This Cereibacter sphaeroides (strain ATCC 17029 / ATH 2.4.9) (Rhodobacter sphaeroides) protein is ATP-dependent protease subunit HslV.